We begin with the raw amino-acid sequence, 214 residues long: uncharacterized protein (214 aa).

This is an uncharacterized protein from Rhodobacter capsulatus (Rhodopseudomonas capsulata).